The sequence spans 337 residues: Transmembrane protein 120B (337 aa).

Residues 1–39 (MSLERCQSEWTEIEQEYQQLQETHKVYRQKLEELTNLQA) are a coiled coil. A run of 6 helical transmembrane segments spans residues 100 to 122 (GLYL…AKFA), 130 to 150 (FKLY…FLLN), 157 to 175 (IFNF…RESI), 185 to 205 (GWWV…LTWP), 268 to 288 (FLLP…VTLF), and 300 to 320 (QVFM…LTTL).

It belongs to the TMEM120 family.

It is found in the nucleus inner membrane. Necessary for efficient adipogenesis. Does not show ion channel activity. This chain is Transmembrane protein 120B (tmem120b), found in Danio rerio (Zebrafish).